Reading from the N-terminus, the 55-residue chain is Accessory gland-specific peptide 70A (55 aa).

The first 19 residues, 1–19 (MKTLSLFLVLVCLLGLVQS), serve as a signal peptide directing secretion. A hydroxyproline mark is found at proline 28, proline 32, proline 34, and proline 38. A disulfide bond links cysteine 43 and cysteine 55.

As to expression, main cells of the accessory glands of males (paragonial gland).

The protein localises to the secreted. Functionally, represses female sexual receptivity and stimulates oviposition. The polypeptide is Accessory gland-specific peptide 70A (Acp70A) (Drosophila mauritiana (Fruit fly)).